A 161-amino-acid chain; its full sequence is Arachidonate 5-lipoxygenase-activating protein (161 aa).

Topologically, residues 1–8 (MDQETVGN) are lumenal. Residues 9-30 (VVLLAIVTLISVVQNGFFAHKV) traverse the membrane as a helical segment. The Cytoplasmic portion of the chain corresponds to 31-52 (EHESRTQNGRSFQRTGTLAFER). The chain crosses the membrane as a helical span at residues 53 to 77 (VYTANQNCVDAYPTFLAVLWSAGLL). Residues 78 to 80 (CSQ) lie on the Lumenal side of the membrane. A helical transmembrane segment spans residues 81–102 (VPAAFAGLMYLLVRQKYFVGYL). The Cytoplasmic segment spans residues 103-107 (GERTQ). Residues 108–115 (STPGYIFG) lie within the membrane without spanning it. The helical transmembrane segment at 116–128 (KRIILFLFLMSVA) threads the bilayer. Over 129–161 (GIFNYYLIFFFGSDFENYIKTVTTTISPLLLIP) the chain is Lumenal.

It belongs to the MAPEG family. In terms of assembly, homotrimer. Interacts with LTC4S and ALOX5.

It localises to the nucleus membrane. The protein localises to the endoplasmic reticulum membrane. Required for leukotriene biosynthesis by ALOX5 (5-lipoxygenase). Anchors ALOX5 to the membrane. Binds arachidonic acid, and could play an essential role in the transfer of arachidonic acid to ALOX5. Binds to MK-886, a compound that blocks the biosynthesis of leukotrienes. This Macaca fascicularis (Crab-eating macaque) protein is Arachidonate 5-lipoxygenase-activating protein (ALOX5AP).